The sequence spans 616 residues: Elongation factor 4 (616 aa).

Residues 17–203 form the tr-type G domain; it reads ERIRNFCIIA…RVCELVPAPV (187 aa). GTP-binding positions include 29–34 and 150–153; these read DHGKST and NKID.

Belongs to the TRAFAC class translation factor GTPase superfamily. Classic translation factor GTPase family. LepA subfamily.

Its subcellular location is the cell membrane. The enzyme catalyses GTP + H2O = GDP + phosphate + H(+). In terms of biological role, required for accurate and efficient protein synthesis under certain stress conditions. May act as a fidelity factor of the translation reaction, by catalyzing a one-codon backward translocation of tRNAs on improperly translocated ribosomes. Back-translocation proceeds from a post-translocation (POST) complex to a pre-translocation (PRE) complex, thus giving elongation factor G a second chance to translocate the tRNAs correctly. Binds to ribosomes in a GTP-dependent manner. The chain is Elongation factor 4 from Corynebacterium jeikeium (strain K411).